The following is a 281-amino-acid chain: Plasmanylethanolamine desaturase (281 aa).

The Cytoplasmic portion of the chain corresponds to 1-28 (MKTQEIEKKVRQQDAQVLAQGYSPAIRA). Residues 29 to 45 (MEIAAIVSFVSLEVALV) traverse the membrane as a helical segment. The Periplasmic portion of the chain corresponds to 46–58 (YRLWGTPYAGTWL). The chain crosses the membrane as a helical span at residues 59 to 75 (LLSAVLLGYLAADFVSG). At 76 to 123 (FVHWMGDTWGSTEMPVLGKALIRPFREHHVDEKAITRHDFVETNGNNC) the chain is on the cytoplasmic side. The chain crosses the membrane as a helical span at residues 124 to 138 (LISLPVAIIALCLPM). Over 139–142 (SGPG) the chain is Periplasmic. A helical transmembrane segment spans residues 143–159 (WVFCASFLGAMIFWVMA). Residues 160 to 281 (TNQFHKWSHM…VQEKPASTRP (122 aa)) lie on the Cytoplasmic side of the membrane. The Histidine box-1 motif lies at 164-168 (HKWSH). A Histidine box-2 motif is present at residues 191-195 (HRIHH).

The protein belongs to the fatty acid desaturase CarF family. Interacts with CarR.

The protein localises to the cell inner membrane. It carries out the reaction a 1-(1,2-saturated alkyl)-2-acyl-sn-glycero-3-phosphoethanolamine + 2 Fe(II)-[cytochrome b5] + O2 + 2 H(+) = a 1-O-(1Z-alkenyl)-2-acyl-sn-glycero-3-phosphoethanolamine + 2 Fe(III)-[cytochrome b5] + 2 H2O. The catalysed reaction is 1-O-(13-methyltetradecyl)-2-(13-methyltetradecanoyl)-sn-glycero-3-phosphoethanolamine + 2 Fe(II)-[cytochrome b5] + O2 + 2 H(+) = 1-O-(1Z-13-methyltetradecenyl)-2-(13-methyltetradecanoyl)-sn-glycero-3-phosphoethanolamine + 2 Fe(III)-[cytochrome b5] + 2 H2O. Plasmanylethanolamine desaturase involved in plasmalogen biogenesis in the membrane, required for light-induced carotenogenesis. Plasmalogens are glycerophospholipids with a hydrocarbon chain linked by a vinyl ether bond at the glycerol sn-1 position, and are involved in antioxidative and signaling mechanisms, most precisely in sensing photooxidative stress through singlet oxygen. Participates in the light-dependent inactivation of the antisigma factor CarR. Mediates signaling by singlet oxygen, generated via photoexcited protoporphyrin IX. This chain is Plasmanylethanolamine desaturase, found in Myxococcus xanthus.